The sequence spans 328 residues: Embigin (328 aa).

An N-terminal signal peptide occupies residues 1-33 (MRSHTGLRALVAPGCSLLLLYLLAATRPDRAVG). The Extracellular portion of the chain corresponds to 34–264 (DPADSAFTSL…VLSFMVPLKP (231 aa)). 9 N-linked (GlcNAc...) asparagine glycosylation sites follow: asparagine 55, asparagine 62, asparagine 75, asparagine 100, asparagine 117, asparagine 189, asparagine 196, asparagine 214, and asparagine 219. 2 consecutive Ig-like domains span residues 67–160 (EQTR…RVPK) and 159–254 (PKVH…IKLV). Disulfide bonds link cysteine 88-cysteine 144 and cysteine 180-cysteine 238. The chain crosses the membrane as a helical span at residues 265-285 (FLAIIAEVILLVAIILLCEVY). Topologically, residues 286–328 (TQKKKNDPDDGKEFEQIEQLKSDDSNGIENNVPRYRKTDSGDQ) are cytoplasmic. Residues 289–309 (KKNDPDDGKEFEQIEQLKSDD) show a composition bias toward basic and acidic residues. The segment at 289-328 (KKNDPDDGKEFEQIEQLKSDDSNGIENNVPRYRKTDSGDQ) is disordered. Residue serine 310 is modified to Phosphoserine.

In terms of assembly, interacts with SLC16A1, SLC16A6 and SLC16A7. N-glycosylated. As to expression, detected in prostate, mammary gland and erythrocytes (at protein level). Detected in testis, brain, prostate, heart, kidney, liver, mammary gland and lung.

It is found in the cell membrane. The protein localises to the synapse. Plays a role in the outgrowth of motoneurons and in the formation of neuromuscular junctions. Following muscle denervation, promotes nerve terminal sprouting and the formation of additional acetylcholine receptor clusters at synaptic sites without affecting terminal Schwann cell number or morphology. Delays the retraction of terminal sprouts following re-innervation of denervated endplates. Plays a role in targeting the monocarboxylate transporters SLC16A1, SLC16A6 and SLC16A7 to the cell membrane. This Rattus norvegicus (Rat) protein is Embigin (Emb).